The primary structure comprises 233 residues: Small ribosomal subunit protein eS4 (233 aa).

An S4 RNA-binding domain is found at 37 to 99 (VPLVVVLRDV…RDEYYRVFPD (63 aa)).

This sequence belongs to the eukaryotic ribosomal protein eS4 family.

This is Small ribosomal subunit protein eS4 from Halobacterium salinarum (strain ATCC 29341 / DSM 671 / R1).